The following is a 258-amino-acid chain: MADWDAAQYLKFADERTRPAADLLARVPLAAPARVVDLGCGPGNSTELLVARYPEAAILGLDTSPGMLAEARRRLPGVAFEQADVASLNPEPPPDLLFANAVLQWLPHHASLLPRLARSLAPGGCLAVQMPDNLEEPSHRLMRRVAGEPPFAARLAAAAASRTRIASFSEYDAWLTAAGCTVDIWRTTYVHALAGHRGIVEWVRGTGLRPFLDPLDAEAQAEFLARYEAALAEAYPPQADGRVLLPFPRLFLVARRTR.

It belongs to the methyltransferase superfamily. Tam family.

The protein localises to the cytoplasm. The catalysed reaction is trans-aconitate + S-adenosyl-L-methionine = (E)-3-(methoxycarbonyl)pent-2-enedioate + S-adenosyl-L-homocysteine. Its function is as follows. Catalyzes the S-adenosylmethionine monomethyl esterification of trans-aconitate. In Methylobacterium nodulans (strain LMG 21967 / CNCM I-2342 / ORS 2060), this protein is Trans-aconitate 2-methyltransferase.